A 186-amino-acid chain; its full sequence is Centromere protein M (186 aa).

The protein resides in the nucleus. It is found in the chromosome. It localises to the centromere. Probable component of a centromeric complex involved in assembly of kinetochore proteins, mitotic progression and chromosome segregation. This Danio rerio (Zebrafish) protein is Centromere protein M (cenpm).